The primary structure comprises 129 residues: Phosphoribosyl-AMP cyclohydrolase (129 aa).

Asp-77 is a binding site for Mg(2+). Cys-78 lines the Zn(2+) pocket. Mg(2+)-binding residues include Asp-79 and Asp-81. Cys-94 and Cys-101 together coordinate Zn(2+).

Belongs to the PRA-CH family. As to quaternary structure, homodimer. Mg(2+) is required as a cofactor. It depends on Zn(2+) as a cofactor.

It localises to the cytoplasm. It catalyses the reaction 1-(5-phospho-beta-D-ribosyl)-5'-AMP + H2O = 1-(5-phospho-beta-D-ribosyl)-5-[(5-phospho-beta-D-ribosylamino)methylideneamino]imidazole-4-carboxamide. The protein operates within amino-acid biosynthesis; L-histidine biosynthesis; L-histidine from 5-phospho-alpha-D-ribose 1-diphosphate: step 3/9. Its function is as follows. Catalyzes the hydrolysis of the adenine ring of phosphoribosyl-AMP. This is Phosphoribosyl-AMP cyclohydrolase from Pelotomaculum thermopropionicum (strain DSM 13744 / JCM 10971 / SI).